Here is a 670-residue protein sequence, read N- to C-terminus: FAD-binding monooxygenase ausC (670 aa).

Residues 144–147, 156–157, and Tyr-162 contribute to the FAD site; these read TWYW and DT. 154-156 provides a ligand contact to NADP(+); the sequence is MCD. Residues 299–305 and 322–323 each bind NADP(+); these read TGASAVQ and RT.

This sequence belongs to the FAD-binding monooxygenase family. The cofactor is FAD.

It catalyses the reaction preaustinoid A + AH2 + O2 = preaustinoid A1 + A + H2O. Its pathway is secondary metabolite biosynthesis; terpenoid biosynthesis. Functionally, FAD-binding monooxygenase; part of the gene cluster that mediates the biosynthesis of calidodehydroaustin, a fungal meroterpenoid. The first step of the pathway is the synthesis of 3,5-dimethylorsellinic acid by the polyketide synthase ausA. 3,5-dimethylorsellinic acid is then prenylated by the polyprenyl transferase ausN. Further epoxidation by the FAD-dependent monooxygenase ausM and cyclization by the probable terpene cyclase ausL lead to the formation of protoaustinoid A. Protoaustinoid A is then oxidized to spiro-lactone preaustinoid A3 by the combined action of the FAD-binding monooxygenases ausB and ausC, and the dioxygenase ausE. Acid-catalyzed keto-rearrangement and ring contraction of the tetraketide portion of preaustinoid A3 by ausJ lead to the formation of preaustinoid A4. The aldo-keto reductase ausK, with the help of ausH, is involved in the next step by transforming preaustinoid A4 into isoaustinone which is in turn hydroxylated by the P450 monooxygenase ausI to form austinolide. The cytochrome P450 monooxygenase ausG modifies austinolide to austinol. Austinol is further acetylated to austin by the O-acetyltransferase ausP, which spontaneously changes to dehydroaustin. The cytochrome P450 monooxygenase ausR then converts dehydroaustin is into 7-dehydrodehydroaustin. The hydroxylation catalyzed by ausR permits the O-acetyltransferase ausQ to add an additional acetyl group to the molecule, leading to the formation of acetoxydehydroaustin. The short chain dehydrogenase ausT catalyzes the reduction of the double bond present between carbon atoms 1 and 2 to convert 7-dehydrodehydroaustin into 1,2-dihydro-7-hydroxydehydroaustin. AusQ catalyzes not only an acetylation reaction but also the addition of the PKS ausV diketide product to 1,2-dihydro-7-hydroxydehydroaustin, forming precalidodehydroaustin. Finally, the iron/alpha-ketoglutarate-dependent dioxygenase converts precalidodehydroaustin into calidodehydroaustin. The polypeptide is FAD-binding monooxygenase ausC (Aspergillus calidoustus).